Reading from the N-terminus, the 434-residue chain is Homogentisate 1,2-dioxygenase (434 aa).

The Proton acceptor role is filled by His-289. Fe cation is bound by residues His-332 and Glu-338. Homogentisate-binding residues include Tyr-347 and His-368. His-368 is a binding site for Fe cation.

This sequence belongs to the homogentisate dioxygenase family. As to quaternary structure, hexamer; dimer of trimers. The cofactor is Fe cation.

The enzyme catalyses homogentisate + O2 = 4-maleylacetoacetate + H(+). It functions in the pathway amino-acid degradation; L-phenylalanine degradation; acetoacetate and fumarate from L-phenylalanine: step 4/6. Its function is as follows. Involved in the catabolism of homogentisate (2,5-dihydroxyphenylacetate or 2,5-OH-PhAc), a central intermediate in the degradation of phenylalanine and tyrosine. Catalyzes the oxidative ring cleavage of the aromatic ring of homogentisate to yield maleylacetoacetate. The sequence is that of Homogentisate 1,2-dioxygenase from Pseudomonas syringae pv. tomato (strain ATCC BAA-871 / DC3000).